The sequence spans 454 residues: Chromosomal replication initiator protein DnaA (454 aa).

Residues 1 to 83 (MTEKEHFFWN…IKVEYVFDEA (83 aa)) form a domain I, interacts with DnaA modulators region. Residues 83–113 (ALVSETKPTLANNDFSNKREQQTPDLPTLNS) form a domain II region. The domain III, AAA+ region stretch occupies residues 114–332 (DLNSKYTFDN…GALKDISLVA (219 aa)). ATP contacts are provided by Gly158, Gly160, Lys161, and Thr162. Residues 333–454 (NVRQLDTITV…EIDTIKNKIK (122 aa)) are domain IV, binds dsDNA.

This sequence belongs to the DnaA family. As to quaternary structure, oligomerizes as a right-handed, spiral filament on DNA at oriC.

The protein resides in the cytoplasm. Its function is as follows. Plays an essential role in the initiation and regulation of chromosomal replication. ATP-DnaA binds to the origin of replication (oriC) to initiate formation of the DNA replication initiation complex once per cell cycle. Binds the DnaA box (a 9 base pair repeat at the origin) and separates the double-stranded (ds)DNA. Forms a right-handed helical filament on oriC DNA; dsDNA binds to the exterior of the filament while single-stranded (ss)DNA is stabiized in the filament's interior. The ATP-DnaA-oriC complex binds and stabilizes one strand of the AT-rich DNA unwinding element (DUE), permitting loading of DNA polymerase. After initiation quickly degrades to an ADP-DnaA complex that is not apt for DNA replication. Binds acidic phospholipids. This is Chromosomal replication initiator protein DnaA from Streptococcus thermophilus (strain ATCC BAA-250 / LMG 18311).